We begin with the raw amino-acid sequence, 141 residues long: MAKKVVGEIKLQIPAGKANPSPPVGPALGQRGVNIMEFCKAFNERTKDMGSFNIPVIITVYQDKSFTFITKKPPVTDLIKKASGVEKGSDNPLKNKIAKLTHKQVEEIAQLKMEDLNTSTMEAAKKIVMGSARSMGVEVVD.

This sequence belongs to the universal ribosomal protein uL11 family. In terms of assembly, part of the ribosomal stalk of the 50S ribosomal subunit. Interacts with L10 and the large rRNA to form the base of the stalk. L10 forms an elongated spine to which L12 dimers bind in a sequential fashion forming a multimeric L10(L12)X complex. Post-translationally, one or more lysine residues are methylated.

Forms part of the ribosomal stalk which helps the ribosome interact with GTP-bound translation factors. The protein is Large ribosomal subunit protein uL11 of Helicobacter pylori (strain P12).